Consider the following 128-residue polypeptide: Pi-hexatoxin-Hi1c (128 aa).

Positions 1–19 (MKLRITLALTSVLAFCVFG) are cleaved as a signal peptide. Residues 20-47 (DKENENLMENLLEDDLLDIFTDAIHMER) constitute a propeptide that is removed on maturation. 6 disulfides stabilise this stretch: cysteine 54–cysteine 69, cysteine 61–cysteine 74, cysteine 68–cysteine 84, cysteine 93–cysteine 108, cysteine 100–cysteine 113, and cysteine 107–cysteine 124. Domain repeat units lie at residues 54-84 (CIAK…HEVC) and 93-124 (CLEK…HPVC). Positions 54 to 124 (CIAKWKSCAG…ERRGNKHPVC (71 aa)) are 2 X approximate repeats with cysteine pattern C-C-CC-C-C.

This sequence belongs to the psalmotoxin-1 family. Double-knot toxin subfamily. In terms of tissue distribution, expressed by the venom gland.

Its subcellular location is the secreted. In terms of biological role, this toxin potently and selectively inhibits ASIC1a, an isoform of the gene ASIC1. It incompletely inhibits ASIC1a activation in a pH-independent and slowly reversible manner. This toxin acts by binding to and stabilizing the closed state of the channel, thereby impeding the transition into a conducting state. This toxin may bind to the acidic pocket of ASIC1a, since mutation of a key residue of this pocket (Arg-350) abolishes the ability of the toxin to inhibit ASIC1a. In vivo, this toxin protects the brain from neuronal injury when administered up to 8 hours after stroke onset. This is Pi-hexatoxin-Hi1c from Hadronyche infensa (Fraser island funnel-web spider).